A 29-amino-acid polypeptide reads, in one-letter code: Glucagon (29 aa).

This sequence belongs to the glucagon family.

The protein resides in the secreted. In terms of biological role, glucagon plays a key role in glucose metabolism and homeostasis. Regulates blood glucose by increasing gluconeogenesis and decreasing glycolysis. The protein is Glucagon (gcg) of Callorhinchus milii (Ghost shark).